Consider the following 84-residue polypeptide: Small ribosomal subunit protein bS16 (84 aa).

The protein belongs to the bacterial ribosomal protein bS16 family.

The polypeptide is Small ribosomal subunit protein bS16 (Paraburkholderia phymatum (strain DSM 17167 / CIP 108236 / LMG 21445 / STM815) (Burkholderia phymatum)).